The chain runs to 319 residues: Histidinol-phosphate aminotransferase 1 (319 aa).

Residue Lys182 is modified to N6-(pyridoxal phosphate)lysine.

The protein belongs to the class-II pyridoxal-phosphate-dependent aminotransferase family. Histidinol-phosphate aminotransferase subfamily. Pyridoxal 5'-phosphate serves as cofactor.

It carries out the reaction L-histidinol phosphate + 2-oxoglutarate = 3-(imidazol-4-yl)-2-oxopropyl phosphate + L-glutamate. It functions in the pathway amino-acid biosynthesis; L-histidine biosynthesis; L-histidine from 5-phospho-alpha-D-ribose 1-diphosphate: step 7/9. The protein is Histidinol-phosphate aminotransferase 1 (hisC1) of Archaeoglobus fulgidus (strain ATCC 49558 / DSM 4304 / JCM 9628 / NBRC 100126 / VC-16).